The following is a 474-amino-acid chain: tRNA-2-methylthio-N(6)-dimethylallyladenosine synthase (474 aa).

Residues 3 to 120 (KKLHIKTWGC…LPEMINSVRG (118 aa)) enclose the MTTase N-terminal domain. Residues Cys12, Cys49, Cys83, Cys157, Cys161, and Cys164 each coordinate [4Fe-4S] cluster. The Radical SAM core domain occupies 143-375 (RADGPTAFVS…QDRINQQTTA (233 aa)). The region spanning 378 to 441 (RRKLGTVQRI…ANSLRGMLLR (64 aa)) is the TRAM domain.

It belongs to the methylthiotransferase family. MiaB subfamily. Monomer. Requires [4Fe-4S] cluster as cofactor.

The protein resides in the cytoplasm. The enzyme catalyses N(6)-dimethylallyladenosine(37) in tRNA + (sulfur carrier)-SH + AH2 + 2 S-adenosyl-L-methionine = 2-methylsulfanyl-N(6)-dimethylallyladenosine(37) in tRNA + (sulfur carrier)-H + 5'-deoxyadenosine + L-methionine + A + S-adenosyl-L-homocysteine + 2 H(+). In terms of biological role, catalyzes the methylthiolation of N6-(dimethylallyl)adenosine (i(6)A), leading to the formation of 2-methylthio-N6-(dimethylallyl)adenosine (ms(2)i(6)A) at position 37 in tRNAs that read codons beginning with uridine. The polypeptide is tRNA-2-methylthio-N(6)-dimethylallyladenosine synthase (Erwinia tasmaniensis (strain DSM 17950 / CFBP 7177 / CIP 109463 / NCPPB 4357 / Et1/99)).